The chain runs to 236 residues: 7-cyano-7-deazaguanine synthase (236 aa).

Position 7-17 (cysteine 7–alanine 17) interacts with ATP. The Zn(2+) site is built by cysteine 185, cysteine 193, cysteine 196, and cysteine 199.

It belongs to the QueC family. Zn(2+) serves as cofactor.

It catalyses the reaction 7-carboxy-7-deazaguanine + NH4(+) + ATP = 7-cyano-7-deazaguanine + ADP + phosphate + H2O + H(+). It participates in purine metabolism; 7-cyano-7-deazaguanine biosynthesis. In terms of biological role, catalyzes the ATP-dependent conversion of 7-carboxy-7-deazaguanine (CDG) to 7-cyano-7-deazaguanine (preQ(0)). The sequence is that of 7-cyano-7-deazaguanine synthase from Rhizobium leguminosarum bv. trifolii (strain WSM2304).